Reading from the N-terminus, the 355-residue chain is Zinc finger protein CONSTANS-LIKE 5 (355 aa).

Cys22, Cys25, Cys45, His50, Cys61, Cys64, Cys84, and His89 together coordinate Zn(2+). A B box-type 1; atypical zinc finger spans residues 22–60 (CDACKSVTAAVFCRVDSAFLCIACDTRIHSFTRHERVWV). The B box-type 2; atypical zinc-finger motif lies at 61-103 (CEVCEQAPAAVTCKADAAALCVSCDADIHSANPLASRHERVPV). Positions 285-327 (REARVLRYREKRKNRKFEKTIRYASRKAYAESRPRIKGRFAKR) constitute a CCT domain.

This sequence belongs to the CONSTANS family.

It localises to the nucleus. This Arabidopsis thaliana (Mouse-ear cress) protein is Zinc finger protein CONSTANS-LIKE 5 (COL5).